The sequence spans 284 residues: uncharacterized protein (284 aa).

The N-terminal stretch at 1–23 is a signal peptide; that stretch reads MKRGCAIAVMICGLITSVSAASA.

The protein belongs to the surface antigen msp4 family.

This is an uncharacterized protein from Brucella melitensis biotype 1 (strain ATCC 23456 / CCUG 17765 / NCTC 10094 / 16M).